Here is a 207-residue protein sequence, read N- to C-terminus: Small ribosomal subunit protein uS4 (207 aa).

An S4 RNA-binding domain is found at 96-156 (RRLDNVVYRL…EKFKTSSFIA (61 aa)).

Belongs to the universal ribosomal protein uS4 family. Part of the 30S ribosomal subunit. Contacts protein S5. The interaction surface between S4 and S5 is involved in control of translational fidelity.

In terms of biological role, one of the primary rRNA binding proteins, it binds directly to 16S rRNA where it nucleates assembly of the body of the 30S subunit. Its function is as follows. With S5 and S12 plays an important role in translational accuracy. This chain is Small ribosomal subunit protein uS4, found in Leptospira interrogans serogroup Icterohaemorrhagiae serovar copenhageni (strain Fiocruz L1-130).